The chain runs to 503 residues: Diels-Alderase cghA (503 aa).

Belongs to the Diels-Alderase family.

It carries out the reaction (2S)-3-[(2S)-3,5-dioxo-4-[(2E,4R,6R,8E,10E,12E)-4,6,12-trimethyltetradeca-2,8,10,12-tetraenoyl]pyrrolidin-2-yl]-2-hydroxy-2-methylpropanoate = sch 210972. It participates in secondary metabolite biosynthesis. Functionally, diels-Alderase; part of the gene cluster that mediates the biosynthesis of the tetramic acid Sch210972, a potential anti-HIV fungal natural product that contains a decalin core. The PKS module of cghG together with the enoylreductase cghC catalyze the formation of the polyketide unit which is then conjugated to 4-hydroxyl-4-methyl glutamate (HMG) by the condensation domain of the cghG NRPS module. One unique structural feature of Sch210972 is the tetramic acid motif proposed to be derived from the non-proteinogenic amino acid HMG, by a Dieckmann-type condensation catalyzed by the reductase domain of cghG. The aldolase cghB catalyzes the aldol condensation of 2 molecules of pyruvic acid to yield the intermediate 4-hydroxyl-4-methyl-2-oxoglutarate (HMOG), which can then be stereoselectively transaminated by an unidentified enzyme to form HMG. The Diels-Alderase cghA then uses the Dieckmann product released by cghG as substrate and catalyzes the Diels-Alder cycloaddition to form the decalin ring of Sch210972. CghA also suppresses the nonenzymatic formation of the alternative stereoisomer. The sequence is that of Diels-Alderase cghA from Chaetomium globosum (strain ATCC 6205 / CBS 148.51 / DSM 1962 / NBRC 6347 / NRRL 1970) (Soil fungus).